Here is a 135-residue protein sequence, read N- to C-terminus: Nitrogen fixation protein NifU 1 (135 aa).

Positions 1–10 (MRDMQDDDTK) are enriched in basic and acidic residues. The disordered stretch occupies residues 1–29 (MRDMQDDDTKSPAPPPAAAAAARRAAGQA). A compositionally biased stretch (low complexity) spans 18 to 29 (AAAAARRAAGQA).

The protein belongs to the NifU family.

In terms of biological role, may be involved in the formation or repair of [Fe-S] clusters present in iron-sulfur proteins. In Rhodobacter capsulatus (Rhodopseudomonas capsulata), this protein is Nitrogen fixation protein NifU 1 (nifU1).